The chain runs to 745 residues: Aminopeptidase NAALADL1 (745 aa).

The Cytoplasmic segment spans residues methionine 1–isoleucine 6. A helical; Signal-anchor for type II membrane protein transmembrane segment spans residues leucine 7–isoleucine 28. Residues proline 29–leucine 745 lie on the Extracellular side of the membrane. N-linked (GlcNAc...) asparagine glycosylation is found at asparagine 128, asparagine 141, and asparagine 235. Ca(2+)-binding residues include threonine 263 and leucine 266. Asparagine 279, asparagine 302, and asparagine 329 each carry an N-linked (GlcNAc...) asparagine glycan. Cysteine 301 and cysteine 318 are joined by a disulfide. Positions 373 and 383 each coordinate Zn(2+). The active-site Proton donor/acceptor is the glutamate 421. Glutamate 422 is a Zn(2+) binding site. Ca(2+) contacts are provided by glutamate 430 and glutamate 433. Aspartate 450 serves as a coordination point for Zn(2+). Asparagine 456 and asparagine 497 each carry an N-linked (GlcNAc...) asparagine glycan. Histidine 550 is a binding site for Zn(2+). 2 N-linked (GlcNAc...) asparagine glycosylation sites follow: asparagine 593 and asparagine 620.

It belongs to the peptidase M28 family. M28B subfamily. Homodimer. Requires Zn(2+) as cofactor. N-glycosylated.

The protein resides in the apical cell membrane. Functionally, aminopeptidase with broad substrate specificity. Has lower activity with substrates that have Asp or Glu in the P2' position, or Pro in the P3' position. Lacks activity with substrates that have both Pro in the P3' position and Asp or Glu in the P2' position. Lacks carboxypeptidase activity. Lacks dipeptidyl-peptidase IV type activity. The protein is Aminopeptidase NAALADL1 (Naaladl1) of Mus musculus (Mouse).